The chain runs to 88 residues: Small ribosomal subunit protein bS20 (88 aa).

Belongs to the bacterial ribosomal protein bS20 family.

Its function is as follows. Binds directly to 16S ribosomal RNA. The polypeptide is Small ribosomal subunit protein bS20 (Natranaerobius thermophilus (strain ATCC BAA-1301 / DSM 18059 / JW/NM-WN-LF)).